The sequence spans 236 residues: MKFSAILTALTATIATVAGYETSGKPHTVDILIDYSIKETPEISQTDVANWVNGQKYTLEYVVNNNEETEIAVVGVTGQFKNPVTNQIVTNLTTGQVGPIAVAPGESIKFEQIVDVDLIPDNYELIPHVFVAHDDLIKVIPCRGQLASIVDAAVSFFDPRLIFLELVLLATFGGIAYFVYEIWGKQYLRGTAPVKVPVKKSGSPVAVKEASPVGSASGFDESWIPEAHLKKNKKKA.

An N-terminal signal peptide occupies residues 1–19 (MKFSAILTALTATIATVAG). Residues 20 to 161 (YETSGKPHTV…AAVSFFDPRL (142 aa)) are Lumenal-facing. Residues 162–182 (IFLELVLLATFGGIAYFVYEI) form a helical membrane-spanning segment. Residues 183–236 (WGKQYLRGTAPVKVPVKKSGSPVAVKEASPVGSASGFDESWIPEAHLKKNKKKA) are Cytoplasmic-facing.

Belongs to the IRC22 family.

Its subcellular location is the endoplasmic reticulum membrane. Functionally, is probably involved in a pathway contributing to genomic integrity. This Candida tropicalis (strain ATCC MYA-3404 / T1) (Yeast) protein is Increased recombination centers protein 22-2 (IRC22-2).